A 186-amino-acid polypeptide reads, in one-letter code: ADP-ribosylation factor-like protein 8A (186 aa).

Residues M1–E19 constitute an intramembrane region (note=Mediates targeting to membranes). Residues Q29 to T35, D71 to Q75, and N130 to D133 each bind GTP.

Belongs to the small GTPase superfamily. Arf family. Interacts with PLEKHM1. When GTP-bound, interacts with RUFY3 and RUFY4, but not with RUFY1, nor RUFY2. As to expression, ubiquitously expressed.

Its subcellular location is the late endosome membrane. It localises to the lysosome membrane. It is found in the cytoplasm. The protein resides in the cytoskeleton. The protein localises to the spindle. Its subcellular location is the cell projection. It localises to the axon. It is found in the synapse. Plays a role in lysosome motility. In neurons, mediates the anterograde axonal long-range transport of presynaptic lysosome-related vesicles required for presynaptic biogenesis and synaptic function. May play a role in chromosome segregation. The polypeptide is ADP-ribosylation factor-like protein 8A (ARL8A) (Homo sapiens (Human)).